A 1447-amino-acid chain; its full sequence is Gag-Pol polyprotein (1447 aa).

Glycine 2 is lipidated: N-myristoyl glycine; by host. An interaction with Gp41 region spans residues 7 to 31 (VLSGGELDRWEKIRLRPGGKKKYKL). An interaction with host CALM1 region spans residues 8 to 43 (LSGGELDRWEKIRLRPGGKKKYKLKHIVWASRELER). Residues 12-19 (ELDRWEKI) are interaction with host AP3D1. The tract at residues 14–33 (DRWEKIRLRPGGKKKYKLKH) is interaction with membrane phosphatidylinositol 4,5-bisphosphate and RNA. Residues 16–22 (WEKIRLR) carry the Nuclear export signal motif. Residues 26–32 (KKKYKLK) carry the Nuclear localization signal motif. The interval 73–77 (EELRS) is interaction with membrane phosphatidylinositol 4,5-bisphosphate. A disordered region spans residues 106-128 (EEQNKSKKKAQQAAADTGHSSQV). Residue tyrosine 132 is modified to Phosphotyrosine; by host. The interaction with human PPIA/CYPA and NUP153 stretch occupies residues 189–227 (NTVGGHQAAMQMLKETINEEAAEWDRVHPVHAGPIAPGQ). The tract at residues 277–363 (YSPTSILDIR…GGPGHKARVL (87 aa)) is dimerization/Multimerization of capsid protein p24. At arginine 387 the chain carries Asymmetric dimethylarginine; in Nucleocapsid protein p7; by host PRMT6. Residues 390-407 (VKCFNCGKEGHTARNCRA) form a CCHC-type 1 zinc finger. At arginine 409 the chain carries Asymmetric dimethylarginine; in Nucleocapsid protein p7; by host PRMT6. The CCHC-type 2 zinc-finger motif lies at 411–428 (KGCWKCGKEGHQMKDCTE). A disordered region spans residues 446–493 (REFSSEQTRANSPTISSEQTRANSPTRRELQVWGRDNNSPSEAGADRQ). Residues 450 to 470 (SEQTRANSPTISSEQTRANSP) are compositionally biased toward polar residues. Residues 501–505 (PQITL) are dimerization of protease. A Peptidase A2 domain is found at 520–589 (KEALLDTGAD…TPVNIIGRNL (70 aa)). Aspartate 525 serves as the catalytic For protease activity; shared with dimeric partner. Dimerization of protease regions lie at residues 549–555 (GIGGFIK) and 588–600 (NLLT…LNFP). In terms of domain architecture, Reverse transcriptase spans 643–833 (EGKISKIGPE…PPFLWMGYEL (191 aa)). 3 residues coordinate Mg(2+): aspartate 709, aspartate 784, and aspartate 785. The tract at residues 826-834 (FLWMGYELH) is RT 'primer grip'. A Tryptophan repeat motif motif is present at residues 997 to 1013 (WETWWTEYWQATWIPEW). The 124-residue stretch at 1033–1156 (IVGAETFYVD…VDKLVSAGIR (124 aa)) folds into the RNase H type-1 domain. Residues aspartate 1042, glutamate 1077, aspartate 1097, and aspartate 1148 each contribute to the Mg(2+) site. Residues 1162–1203 (DGIDKAQDEHEKYHSNWRAMASDFNLPPVVAKEIVASCDKCQ) form an Integrase-type zinc finger. Positions 1171, 1175, 1199, and 1202 each coordinate Zn(2+). The region spanning 1213-1363 (VDCSPGIWQL…SAGERIVDII (151 aa)) is the Integrase catalytic domain. Mg(2+) contacts are provided by aspartate 1223, aspartate 1275, and glutamate 1311. A DNA-binding region (integrase-type) is located at residues 1382–1429 (FRVYYRDSRNPLWKGPAKLLWKGEGAVVIQDNSDIKVVPRRKAKIIRD).

In terms of assembly, homotrimer; further assembles as hexamers of trimers. Interacts with gp41 (via C-terminus). Interacts with host CALM1; this interaction induces a conformational change in the Matrix protein, triggering exposure of the myristate group. Interacts with host AP3D1; this interaction allows the polyprotein trafficking to multivesicular bodies during virus assembly. Part of the pre-integration complex (PIC) which is composed of viral genome, matrix protein, Vpr and integrase. Homodimer; the homodimer further multimerizes as homohexamers or homopentamers. Interacts with human PPIA/CYPA; This interaction stabilizes the capsid. Interacts with human NUP153. Interacts with host PDZD8; this interaction stabilizes the capsid. Interacts with monkey TRIM5; this interaction destabilizes the capsid. As to quaternary structure, homodimer, whose active site consists of two apposed aspartic acid residues. In terms of assembly, heterodimer of p66 RT and p51 RT (RT p66/p51). Heterodimerization of RT is essential for DNA polymerase activity. The overall folding of the subdomains is similar in p66 RT and p51 RT but the spatial arrangements of the subdomains are dramatically different. Homotetramer; may further associate as a homohexadecamer. Part of the pre-integration complex (PIC) which is composed of viral genome, matrix protein, Vpr and integrase. Interacts with human SMARCB1/INI1 and human PSIP1/LEDGF isoform 1. Interacts with human KPNA3; this interaction might play a role in nuclear import of the pre-integration complex. Interacts with human NUP153; this interaction might play a role in nuclear import of the pre-integration complex. Mg(2+) serves as cofactor. Specific enzymatic cleavages by the viral protease yield mature proteins. The protease is released by autocatalytic cleavage. The polyprotein is cleaved during and after budding, this process is termed maturation. Proteolytic cleavage of p66 RT removes the RNase H domain to yield the p51 RT subunit. Nucleocapsid protein p7 might be further cleaved after virus entry. Post-translationally, tyrosine phosphorylated presumably in the virion by a host kinase. Phosphorylation is apparently not a major regulator of membrane association. In terms of processing, phosphorylated possibly by host MAPK1; this phosphorylation is necessary for Pin1-mediated virion uncoating. Methylated by host PRMT6, impairing its function by reducing RNA annealing and the initiation of reverse transcription.

It is found in the host cell membrane. The protein localises to the host endosome. The protein resides in the host multivesicular body. Its subcellular location is the virion membrane. It localises to the host nucleus. It is found in the host cytoplasm. The protein localises to the virion. The catalysed reaction is Specific for a P1 residue that is hydrophobic, and P1' variable, but often Pro.. It catalyses the reaction 3'-end directed exonucleolytic cleavage of viral RNA-DNA hybrid.. The enzyme catalyses Endohydrolysis of RNA in RNA/DNA hybrids. Three different cleavage modes: 1. sequence-specific internal cleavage of RNA. Human immunodeficiency virus type 1 and Moloney murine leukemia virus enzymes prefer to cleave the RNA strand one nucleotide away from the RNA-DNA junction. 2. RNA 5'-end directed cleavage 13-19 nucleotides from the RNA end. 3. DNA 3'-end directed cleavage 15-20 nucleotides away from the primer terminus.. It carries out the reaction DNA(n) + a 2'-deoxyribonucleoside 5'-triphosphate = DNA(n+1) + diphosphate. With respect to regulation, protease: The viral protease is inhibited by many synthetic protease inhibitors (PIs), such as amprenavir, atazanavir, indinavir, loprinavir, nelfinavir, ritonavir and saquinavir. Use of protease inhibitors in tritherapy regimens permit more ambitious therapeutic strategies. Reverse transcriptase/ribonuclease H: RT can be inhibited either by nucleoside RT inhibitors (NRTIs) or by non nucleoside RT inhibitors (NNRTIs). NRTIs act as chain terminators, whereas NNRTIs inhibit DNA polymerization by binding a small hydrophobic pocket near the RT active site and inducing an allosteric change in this region. Classical NRTIs are abacavir, adefovir (PMEA), didanosine (ddI), lamivudine (3TC), stavudine (d4T), tenofovir (PMPA), zalcitabine (ddC), and zidovudine (AZT). Classical NNRTIs are atevirdine (BHAP U-87201E), delavirdine, efavirenz (DMP-266), emivirine (I-EBU), and nevirapine (BI-RG-587). The tritherapies used as a basic effective treatment of AIDS associate two NRTIs and one NNRTI. In terms of biological role, mediates, with Gag polyprotein, the essential events in virion assembly, including binding the plasma membrane, making the protein-protein interactions necessary to create spherical particles, recruiting the viral Env proteins, and packaging the genomic RNA via direct interactions with the RNA packaging sequence (Psi). Gag-Pol polyprotein may regulate its own translation, by the binding genomic RNA in the 5'-UTR. At low concentration, the polyprotein would promote translation, whereas at high concentration, the polyprotein would encapsidate genomic RNA and then shut off translation. Functionally, targets the polyprotein to the plasma membrane via a multipartite membrane-binding signal, that includes its myristoylated N-terminus. Matrix protein is part of the pre-integration complex. Implicated in the release from host cell mediated by Vpu. Binds to RNA. Forms the conical core that encapsulates the genomic RNA-nucleocapsid complex in the virion. Most core are conical, with only 7% tubular. The core is constituted by capsid protein hexamer subunits. The core is disassembled soon after virion entry. Host restriction factors such as TRIM5-alpha or TRIMCyp bind retroviral capsids and cause premature capsid disassembly, leading to blocks in reverse transcription. Capsid restriction by TRIM5 is one of the factors which restricts HIV-1 to the human species. Host PIN1 apparently facilitates the virion uncoating. On the other hand, interactions with PDZD8 or CYPA stabilize the capsid. Its function is as follows. Encapsulates and protects viral dimeric unspliced genomic RNA (gRNA). Binds these RNAs through its zinc fingers. Acts as a nucleic acid chaperone which is involved in rearangement of nucleic acid secondary structure during gRNA retrotranscription. Also facilitates template switch leading to recombination. As part of the polyprotein, participates in gRNA dimerization, packaging, tRNA incorporation and virion assembly. In terms of biological role, aspartyl protease that mediates proteolytic cleavages of Gag and Gag-Pol polyproteins during or shortly after the release of the virion from the plasma membrane. Cleavages take place as an ordered, step-wise cascade to yield mature proteins. This process is called maturation. Displays maximal activity during the budding process just prior to particle release from the cell. Also cleaves Nef and Vif, probably concomitantly with viral structural proteins on maturation of virus particles. Hydrolyzes host EIF4GI and PABP1 in order to shut off the capped cellular mRNA translation. The resulting inhibition of cellular protein synthesis serves to ensure maximal viral gene expression and to evade host immune response. Also mediates cleavage of host YTHDF3. Mediates cleavage of host CARD8, thereby activating the CARD8 inflammasome, leading to the clearance of latent HIV-1 in patient CD4(+) T-cells after viral reactivation; in contrast, HIV-1 can evade CARD8-sensing when its protease remains inactive in infected cells prior to viral budding. Functionally, multifunctional enzyme that converts the viral RNA genome into dsDNA in the cytoplasm, shortly after virus entry into the cell. This enzyme displays a DNA polymerase activity that can copy either DNA or RNA templates, and a ribonuclease H (RNase H) activity that cleaves the RNA strand of RNA-DNA heteroduplexes in a partially processive 3' to 5' endonucleasic mode. Conversion of viral genomic RNA into dsDNA requires many steps. A tRNA(3)-Lys binds to the primer-binding site (PBS) situated at the 5'-end of the viral RNA. RT uses the 3' end of the tRNA primer to perform a short round of RNA-dependent minus-strand DNA synthesis. The reading proceeds through the U5 region and ends after the repeated (R) region which is present at both ends of viral RNA. The portion of the RNA-DNA heteroduplex is digested by the RNase H, resulting in a ssDNA product attached to the tRNA primer. This ssDNA/tRNA hybridizes with the identical R region situated at the 3' end of viral RNA. This template exchange, known as minus-strand DNA strong stop transfer, can be either intra- or intermolecular. RT uses the 3' end of this newly synthesized short ssDNA to perform the RNA-dependent minus-strand DNA synthesis of the whole template. RNase H digests the RNA template except for two polypurine tracts (PPTs) situated at the 5'-end and near the center of the genome. It is not clear if both polymerase and RNase H activities are simultaneous. RNase H probably can proceed both in a polymerase-dependent (RNA cut into small fragments by the same RT performing DNA synthesis) and a polymerase-independent mode (cleavage of remaining RNA fragments by free RTs). Secondly, RT performs DNA-directed plus-strand DNA synthesis using the PPTs that have not been removed by RNase H as primers. PPTs and tRNA primers are then removed by RNase H. The 3' and 5' ssDNA PBS regions hybridize to form a circular dsDNA intermediate. Strand displacement synthesis by RT to the PBS and PPT ends produces a blunt ended, linear dsDNA copy of the viral genome that includes long terminal repeats (LTRs) at both ends. Catalyzes viral DNA integration into the host chromosome, by performing a series of DNA cutting and joining reactions. This enzyme activity takes place after virion entry into a cell and reverse transcription of the RNA genome in dsDNA. The first step in the integration process is 3' processing. This step requires a complex comprising the viral genome, matrix protein, Vpr and integrase. This complex is called the pre-integration complex (PIC). The integrase protein removes 2 nucleotides from each 3' end of the viral DNA, leaving recessed CA OH's at the 3' ends. In the second step, the PIC enters cell nucleus. This process is mediated through integrase and Vpr proteins, and allows the virus to infect a non dividing cell. This ability to enter the nucleus is specific of lentiviruses, other retroviruses cannot and rely on cell division to access cell chromosomes. In the third step, termed strand transfer, the integrase protein joins the previously processed 3' ends to the 5' ends of strands of target cellular DNA at the site of integration. The 5'-ends are produced by integrase-catalyzed staggered cuts, 5 bp apart. A Y-shaped, gapped, recombination intermediate results, with the 5'-ends of the viral DNA strands and the 3' ends of target DNA strands remaining unjoined, flanking a gap of 5 bp. The last step is viral DNA integration into host chromosome. This involves host DNA repair synthesis in which the 5 bp gaps between the unjoined strands are filled in and then ligated. Since this process occurs at both cuts flanking the HIV genome, a 5 bp duplication of host DNA is produced at the ends of HIV-1 integration. Alternatively, Integrase may catalyze the excision of viral DNA just after strand transfer, this is termed disintegration. The chain is Gag-Pol polyprotein (gag-pol) from Human immunodeficiency virus type 1 group M subtype B (isolate BH10) (HIV-1).